The sequence spans 103 residues: Large ribosomal subunit protein uL24 (103 aa).

Belongs to the universal ribosomal protein uL24 family. As to quaternary structure, part of the 50S ribosomal subunit.

One of two assembly initiator proteins, it binds directly to the 5'-end of the 23S rRNA, where it nucleates assembly of the 50S subunit. Its function is as follows. One of the proteins that surrounds the polypeptide exit tunnel on the outside of the subunit. In Exiguobacterium sibiricum (strain DSM 17290 / CCUG 55495 / CIP 109462 / JCM 13490 / 255-15), this protein is Large ribosomal subunit protein uL24.